Consider the following 238-residue polypeptide: IkB-like protein (238 aa).

4 ANK repeats span residues 48–77 (GSSVFMWICIYGRIDFLKFLFEQESYPGEI), 86–115 (DGNSALHYLAEKKNHLILEEVLGYFGKNGT), 123–152 (NGMTPVMKAAIRGRTSNVLSLIKFGADPTQ), and 157–187 (RGFTAWDWAVFTGNMELVKSLNHDYQKPLYM). The Nuclear localization signal signature appears at 80–86 (PHRRDKD). The Nuclear localization signal signature appears at 202-213 (KKKPKIIITGCK). The PxIxITxC motif; Interaction with host PPP3CA signature appears at 205–212 (PKIIITGC). An FLCV motif motif is present at residues 227-230 (FLCV).

Belongs to the asfivirus A238L family. As to quaternary structure, interacts with host PPIA. Interacts with host PPP3CA/Calcineurin. Interacts with host RELA/p65; interaction of the 32 kDa form with host RELA results in the formation of a stable complex with NF-kappa-B. Interacts with host PPP3R1. Interacts with host EP300; this interaction inhibits the association of host EP300 with host RELA, JUN and NFATC2. Post-translationally, the protein exists in a 28 kDa and a 32 kDa form, probably due to post-translational modifications which are neither phosphorylation, nor sumoylation.

It localises to the host nucleus. The protein localises to the host cytoplasm. Its function is as follows. I-kappa-B- (IkB)-like protein that inhibits the binding of NF-kappa-B to DNA, thereby down-regulating pro-inflammatory cytokine production. Forms a heterodimer with the NF-kappa-B subunit RELA/p65 and prevents the activation of the NF-kappa-B transcription factor. Also inhibits the host calcineurin phosphatase activity, which is required for the induction of nuclear factor of activated T cells(NFAT)-dependent immune response genes. Inhibits calcineurin function, which is required for the induction of nuclear factor of activated T cells (NFAT)-dependent immune response genes. Prevents the binding of substrates to calcineurin without affecting the phosphatase activity. Does not contain the serine residues that are phosphorylated by host IkB kinase and thus is not degraded following stimulation of the NFkB pathway. In African swine fever virus (strain Badajoz 1971 Vero-adapted) (Ba71V), this protein is IkB-like protein (A238L).